A 341-amino-acid chain; its full sequence is Protein pelota homolog (341 aa).

This sequence belongs to the eukaryotic release factor 1 family. Pelota subfamily. As to quaternary structure, monomer. The cofactor is a divalent metal cation.

Its subcellular location is the cytoplasm. In terms of biological role, may function in recognizing stalled ribosomes, interact with stem-loop structures in stalled mRNA molecules, and effect endonucleolytic cleavage of the mRNA. May play a role in the release non-functional ribosomes and degradation of damaged mRNAs. Has endoribonuclease activity. The protein is Protein pelota homolog of Methanoregula boonei (strain DSM 21154 / JCM 14090 / 6A8).